The following is a 347-amino-acid chain: Large ribosomal subunit protein uL3 (347 aa).

Residues 325 to 347 are disordered; it reads RPPKKKPPVERPQITYISRESKQ.

Belongs to the universal ribosomal protein uL3 family. As to quaternary structure, part of the 50S ribosomal subunit. Forms a cluster with proteins L14 and L24e.

In terms of biological role, one of the primary rRNA binding proteins, it binds directly near the 3'-end of the 23S rRNA, where it nucleates assembly of the 50S subunit. The protein is Large ribosomal subunit protein uL3 of Thermococcus onnurineus (strain NA1).